The chain runs to 134 residues: Retinol-binding protein 2 (134 aa).

Residues K41 and Q109 each contribute to the all-trans-retinol site.

It belongs to the calycin superfamily. Fatty-acid binding protein (FABP) family.

It localises to the cytoplasm. Intracellular transport of retinol. In Rattus norvegicus (Rat), this protein is Retinol-binding protein 2 (Rbp2).